The chain runs to 334 residues: Cysteine and histidine-rich domain-containing protein 1 (334 aa).

Residues C5, C10, C24, H27, C42, C43, C59, H64, C156, C161, C175, H178, C193, C194, C210, and H215 each coordinate Zn(2+). CHORD domains lie at 5–64 (CYNR…KGQH) and 156–215 (CKNG…KGTH). A CS domain is found at 226–315 (VVPCRHDWHQ…AEFMTWARLE (90 aa)).

Functionally, regulates centrosome duplication. This chain is Cysteine and histidine-rich domain-containing protein 1 (chordc1), found in Xenopus laevis (African clawed frog).